A 132-amino-acid polypeptide reads, in one-letter code: Large-conductance mechanosensitive channel (132 aa).

A run of 2 helical transmembrane segments spans residues 11–31 (FISR…GAFG) and 75–95 (GSFL…FLLV).

It belongs to the MscL family. Homopentamer.

It localises to the cell inner membrane. Channel that opens in response to stretch forces in the membrane lipid bilayer. May participate in the regulation of osmotic pressure changes within the cell. This chain is Large-conductance mechanosensitive channel, found in Synechococcus sp. (strain JA-2-3B'a(2-13)) (Cyanobacteria bacterium Yellowstone B-Prime).